The sequence spans 601 residues: Elongation factor 4 (601 aa).

A tr-type G domain is found at 7–189 (KHTRNFSIVA…AIVEKVPVPD (183 aa)). GTP contacts are provided by residues 19–24 (DHGKST) and 136–139 (NKID).

This sequence belongs to the TRAFAC class translation factor GTPase superfamily. Classic translation factor GTPase family. LepA subfamily.

The protein resides in the cell membrane. The catalysed reaction is GTP + H2O = GDP + phosphate + H(+). In terms of biological role, required for accurate and efficient protein synthesis under certain stress conditions. May act as a fidelity factor of the translation reaction, by catalyzing a one-codon backward translocation of tRNAs on improperly translocated ribosomes. Back-translocation proceeds from a post-translocation (POST) complex to a pre-translocation (PRE) complex, thus giving elongation factor G a second chance to translocate the tRNAs correctly. Binds to ribosomes in a GTP-dependent manner. The polypeptide is Elongation factor 4 (Clostridium novyi (strain NT)).